Consider the following 461-residue polypeptide: Bifunctional protein GlmU (461 aa).

The pyrophosphorylase stretch occupies residues 1–234; it reads MSLSVVILAA…EIEVEGANNR (234 aa). UDP-N-acetyl-alpha-D-glucosamine contacts are provided by residues 8–11, K22, Q77, 82–83, 104–106, G141, E159, N174, and N232; these read LAAG, GT, and YGD. D106 contacts Mg(2+). Position 232 (N232) interacts with Mg(2+). The linker stretch occupies residues 235–255; that stretch reads VQLATLERAYQARIAEELMIA. The tract at residues 256–461 is N-acetyltransferase; that stretch reads GASLRDPARI…AGWQRPVKKS (206 aa). Residues R338 and K356 each coordinate UDP-N-acetyl-alpha-D-glucosamine. Residue H368 is the Proton acceptor of the active site. 2 residues coordinate UDP-N-acetyl-alpha-D-glucosamine: Y371 and N382. Residues A385, 391–392, S410, A428, and R445 contribute to the acetyl-CoA site; that span reads NY.

The protein in the N-terminal section; belongs to the N-acetylglucosamine-1-phosphate uridyltransferase family. This sequence in the C-terminal section; belongs to the transferase hexapeptide repeat family. In terms of assembly, homotrimer. Mg(2+) serves as cofactor.

It is found in the cytoplasm. It catalyses the reaction alpha-D-glucosamine 1-phosphate + acetyl-CoA = N-acetyl-alpha-D-glucosamine 1-phosphate + CoA + H(+). The enzyme catalyses N-acetyl-alpha-D-glucosamine 1-phosphate + UTP + H(+) = UDP-N-acetyl-alpha-D-glucosamine + diphosphate. The protein operates within nucleotide-sugar biosynthesis; UDP-N-acetyl-alpha-D-glucosamine biosynthesis; N-acetyl-alpha-D-glucosamine 1-phosphate from alpha-D-glucosamine 6-phosphate (route II): step 2/2. It functions in the pathway nucleotide-sugar biosynthesis; UDP-N-acetyl-alpha-D-glucosamine biosynthesis; UDP-N-acetyl-alpha-D-glucosamine from N-acetyl-alpha-D-glucosamine 1-phosphate: step 1/1. Its pathway is bacterial outer membrane biogenesis; LPS lipid A biosynthesis. Catalyzes the last two sequential reactions in the de novo biosynthetic pathway for UDP-N-acetylglucosamine (UDP-GlcNAc). The C-terminal domain catalyzes the transfer of acetyl group from acetyl coenzyme A to glucosamine-1-phosphate (GlcN-1-P) to produce N-acetylglucosamine-1-phosphate (GlcNAc-1-P), which is converted into UDP-GlcNAc by the transfer of uridine 5-monophosphate (from uridine 5-triphosphate), a reaction catalyzed by the N-terminal domain. This chain is Bifunctional protein GlmU, found in Colwellia psychrerythraea (strain 34H / ATCC BAA-681) (Vibrio psychroerythus).